A 245-amino-acid chain; its full sequence is UPF0280 protein UNCMA_16740 (245 aa).

It belongs to the UPF0280 family.

The protein is UPF0280 protein UNCMA_16740 of Methanocella arvoryzae (strain DSM 22066 / NBRC 105507 / MRE50).